Consider the following 580-residue polypeptide: Cleavage stimulation factor subunit 2 (580 aa).

Residue Ser14 is modified to Phosphoserine. The RRM domain occupies 16-94 (RSVFVGNIPY…RALRVDNAAS (79 aa)). The interval 108–248 (APVIESPYGE…VNGAPPMMQA (141 aa)) is interactions with CSTF3 and SYMPK. Residue Lys189 forms a Glycyl lysine isopeptide (Lys-Gly) (interchain with G-Cter in SUMO2) linkage. Residue Arg308 is modified to Omega-N-methylarginine. 2 disordered regions span residues 311 to 331 (LPTNVPTPRGLLGDAPNDPRG) and 347 to 414 (LGPP…RGLD). 2 stretches are compositionally biased toward basic and acidic residues: residues 363 to 376 (PGHEGRGPPPHDMR) and 405 to 414 (RGGRDPRGLD). The 1; approximate repeat unit spans residues 413-417 (LDARG). The 12 X 5 AA tandem repeats of M-E-A-R-[AG] stretch occupies residues 413-472 (LDARGMEARAMEARGLDARGLEARAMEARAMEARAMEARAMEARAMEARAMEARGMDTRG). 2 repeat units span residues 418–422 (MEARA) and 423–427 (MEARG). The 4; approximate repeat unit spans residues 428–432 (LDARG). One copy of the 5; approximate repeat lies at 433–437 (LEARA). 6 consecutive repeat copies span residues 438–442 (MEARA), 443–447 (MEARA), 448–452 (MEARA), 453–457 (MEARA), 458–462 (MEARA), and 463–467 (MEARG). Residues 468-472 (MDTRG) form a 12; approximate repeat. Residues Arg471 and Arg478 each carry the omega-N-methylarginine modification. Residues 512–536 (MQGASMQGGSQPGGFSPGQSQVTPQ) are disordered. An interaction with RPO2TC1 region spans residues 517–580 (MQGGSQPGGF…EQIQKSTGAP (64 aa)). Phosphoserine is present on residues Ser521 and Ser527.

In terms of assembly, the CSTF complex is composed of CSTF1 (50 kDa subunit), CSTF2 (64 kDa subunit) and CSTF3 (77 kDa subunit). CSTF2 directly interacts with CSTF3, SYMPK and RPO2TC1. Interacts with HSF1 in heat-stressed cells. Interacts with CPSF2, CPSF3 and FIP1L1. Interacts with DDX1. Expressed in most somatic cell types (at protein level). Highly expressed in testis, except in meiotic spermatocytes.

The protein resides in the nucleus. Its function is as follows. One of the multiple factors required for polyadenylation and 3'-end cleavage of mammalian pre-mRNAs. This subunit is directly involved in the binding to pre-mRNAs. This is Cleavage stimulation factor subunit 2 (Cstf2) from Mus musculus (Mouse).